A 523-amino-acid chain; its full sequence is Synaptotagmin-10 (523 aa).

The Vesicular portion of the chain corresponds to methionine 1–serine 55. The cysteine motif stretch occupies residues cysteine 13–serine 35. A helical membrane pass occupies residues leucine 56–phenylalanine 76. Residues tryptophan 77 to proline 523 lie on the Cytoplasmic side of the membrane. Residue threonine 136 is modified to Phosphothreonine. 2 consecutive C2 domains span residues threonine 231–lysine 352 and aspartate 363–histidine 496. Aspartate 262, aspartate 268, aspartate 320, phenylalanine 321, aspartate 322, serine 325, aspartate 328, aspartate 394, aspartate 400, aspartate 454, and aspartate 456 together coordinate Ca(2+).

The protein belongs to the synaptotagmin family. Homodimer; disulfide-linked via the cysteine motif. Can also form heterodimers with SYT3, SYT6, SYT7 and SYT9. The cofactor is Ca(2+). Highly expressed in the olfactory bulb.

Its subcellular location is the cytoplasmic vesicle. The protein localises to the secretory vesicle membrane. In terms of biological role, ca(2+) sensor specifically required for the Ca(2+)-dependent exocytosis of secretory vesicles containing IGF1 in neurons of the olfactory bulb. Exocytosis of IGF1 is required for sensory perception of smell. Not involved in Ca(2+)-dependent synaptic vesicle exocytosis. Acts through Ca(2+) and phospholipid binding to the C2 domain: Ca(2+) induces binding of the C2-domains to phospholipid membranes and to assembled SNARE-complexes; both actions contribute to triggering exocytosis. The chain is Synaptotagmin-10 from Mus musculus (Mouse).